A 358-amino-acid polypeptide reads, in one-letter code: 3-dehydroquinate synthase (358 aa).

NAD(+)-binding positions include 69 to 74 (DGEQYK), 103 to 107 (GVIGD), 127 to 128 (TT), Lys-140, Lys-149, and 167 to 170 (TLNT). The Zn(2+) site is built by Glu-182, His-245, and His-262.

This sequence belongs to the sugar phosphate cyclases superfamily. Dehydroquinate synthase family. Requires Co(2+) as cofactor. The cofactor is Zn(2+). NAD(+) is required as a cofactor.

It is found in the cytoplasm. The catalysed reaction is 7-phospho-2-dehydro-3-deoxy-D-arabino-heptonate = 3-dehydroquinate + phosphate. Its pathway is metabolic intermediate biosynthesis; chorismate biosynthesis; chorismate from D-erythrose 4-phosphate and phosphoenolpyruvate: step 2/7. Catalyzes the conversion of 3-deoxy-D-arabino-heptulosonate 7-phosphate (DAHP) to dehydroquinate (DHQ). This is 3-dehydroquinate synthase from Hydrogenovibrio crunogenus (strain DSM 25203 / XCL-2) (Thiomicrospira crunogena).